The chain runs to 520 residues: MTQTAHPDTVLIVDFGSQVTQLIARRVREAGVYCEIVPFQSAEEGFKRLKPKAVILSGSPASTLDIGSPRAPSVIFESGLPVFGICYGQQTMCAQLGGKVESGHHREFGRAFLEVEKDCALFDGLWSLGSRHQVWMSHGDRVTALPEGFEVVATSSNAPFAFIADETRKYYAVQFHPEVVHTPDGAKLISNFVHKIAGIKGDWTMSAYRAKAVEAIRKQVGGKKVICALSGGVDSSVAALLIHEAVGDQLTCILVDHGLMRKDEAANVVAMFQEHYNLHLLHIDASDRFIGELEGVSDPETKRKIIGRLFIEVFEEEAKKLGGADFLAQGTLYPDVIESVSFTGGPSVTIKSHHNVGGLPERMNMQLVEPLRELFKDEVRVLGRELGLPESFIGRHPFPGPGLAIRCPGGISREKLEILREADAIYLDEIRKAGLYDAIWQAFAVLLPVQTVGVMGDGRTYEFVCALRAVTSVDGMTADFYHYDMEFLGRAATRIINEVRGINRVVYDVTSKPPGTIEWE.

Residues 9-202 enclose the Glutamine amidotransferase type-1 domain; it reads TVLIVDFGSQ…VHKIAGIKGD (194 aa). The active-site Nucleophile is the Cys-86. Active-site residues include His-176 and Glu-178. Residues 203 to 395 enclose the GMPS ATP-PPase domain; sequence WTMSAYRAKA…LGLPESFIGR (193 aa). 230-236 contributes to the ATP binding site; that stretch reads SGGVDSS.

As to quaternary structure, homodimer.

The catalysed reaction is XMP + L-glutamine + ATP + H2O = GMP + L-glutamate + AMP + diphosphate + 2 H(+). It functions in the pathway purine metabolism; GMP biosynthesis; GMP from XMP (L-Gln route): step 1/1. In terms of biological role, catalyzes the synthesis of GMP from XMP. The protein is GMP synthase [glutamine-hydrolyzing] of Sinorhizobium fredii (strain NBRC 101917 / NGR234).